The chain runs to 721 residues: MTSPKPWARSAGSCQTQRAVRTRKKECREEGESDTEKGPAASSASAQCSFPKRVSFFGWAGALDSSGGTTRAMDEEIVSEKQAEESHRQDSANLLIFILLLTLTILTIWLFKHRRARFLHETGLAMIYGLLVGLVLRYGIHVPSDVNNVTLSCEVQSSPTTLLVNVSGKFYEYTLKGEISSHELNNVQDNEMLRKVTFDPEVFFNILLPPIIFYAGYSLKRRHFFRNLGSILAYAFLGTAISCFVIGSIMYGCVTLMKVTGQLAGDFYFTDCLLFGAIVSATDPVTVLAIFHELQVDVELYALLFGESVLNDAVAIVLSSSIVAYQPAGDNSHTFDVTAMFKSIGIFLGIFSGSFAMGAATGVVTCHVTKFTKLREFQLLETGLFFLMSWSTFLLAEAWGFTGVVAVLFCGITQAHYTYNNLSTESQHRTKQLFELLNFLAENFIFSYMGLTLFTFQNHVFNPTFVVGAFIAIFLGRAANIYPLSLLLNLGRRSKIGSNFQHMMMFAGLRGAMAFALAIRDTATYARQMMFSTTLLIVFFTVWVFGGGTTAMLSCLHIRVGVDSDQEHLGVPDNERRTTKAESAWLFRMWYNFDHNYLKPLLTHSGPPLTTTLPACCGPIARCLTSPQAYENQEQLKDDDSDLILNDGDISLTYGDSTVNTESATASAPRRFMGTSTEDALDRELTFGDHELVIRGTRLVLPMDDSEPALNSLDDTRHSPA.

Residues 1–44 are disordered; the sequence is MTSPKPWARSAGSCQTQRAVRTRKKECREEGESDTEKGPAASSA. Residues 26 to 37 are compositionally biased toward basic and acidic residues; it reads ECREEGESDTEK. Helical transmembrane passes span 91–111, 123–143, 196–216, 231–251, 272–292, 298–318, 344–364, 388–412, 434–454, 456–476, 499–519, and 535–555; these read SANL…IWLF, GLAM…IHVP, VTFD…FYAG, ILAY…SIMY, CLLF…AIFH, VELY…AIVL, IGIF…TGVV, MSWS…FCGI, FELL…LTLF, FQNH…IFLG, NFQH…ALAI, and LLIV…MLSC.

Belongs to the monovalent cation:proton antiporter 1 (CPA1) transporter (TC 2.A.36) family. As to quaternary structure, homodimer. Interacts with RACK1; regulates the distribution of SLC9A6 between endosomes and the plasma membrane. Post-translationally, ubiquitinated (in vitro). In terms of processing, glycosylated.

The protein resides in the endosome membrane. Its subcellular location is the recycling endosome membrane. It localises to the early endosome membrane. It is found in the late endosome membrane. The protein localises to the cell membrane. It catalyses the reaction Na(+)(in) + H(+)(out) = Na(+)(out) + H(+)(in). The enzyme catalyses K(+)(in) + H(+)(out) = K(+)(out) + H(+)(in). Functionally, endosomal Na(+), K(+)/H(+) antiporter. Mediates the electroneutral exchange of endosomal luminal H(+) for a cytosolic Na(+) or K(+). By facilitating proton efflux, SLC9A6 counteracts the acidity generated by vacuolar (V)-ATPase, thereby limiting luminal acidification. Responsible for alkalizing and maintaining the endosomal pH, and consequently in, e.g., endosome maturation and trafficking of recycling endosomal cargo. Plays a critical role during neurodevelopment by regulating synaptic development and plasticity. Implicated in the maintenance of cell polarity in a manner that is dependent on its ability to modulate intravesicular pH. Regulates intracelular pH in some specialized cells, osteoclasts and stereocilia where this transporter localizes to the plasma membrane. The polypeptide is Sodium/hydrogen exchanger 6 (Rattus norvegicus (Rat)).